A 98-amino-acid chain; its full sequence is NADH-ubiquinone oxidoreductase chain 4L (98 aa).

Helical transmembrane passes span 1-21 (MSLI…GLLM), 29-49 (ALLC…LTIL), and 61-81 (IILL…LVMI).

Belongs to the complex I subunit 4L family. As to quaternary structure, core subunit of respiratory chain NADH dehydrogenase (Complex I) which is composed of 45 different subunits.

The protein localises to the mitochondrion inner membrane. It carries out the reaction a ubiquinone + NADH + 5 H(+)(in) = a ubiquinol + NAD(+) + 4 H(+)(out). In terms of biological role, core subunit of the mitochondrial membrane respiratory chain NADH dehydrogenase (Complex I) which catalyzes electron transfer from NADH through the respiratory chain, using ubiquinone as an electron acceptor. Part of the enzyme membrane arm which is embedded in the lipid bilayer and involved in proton translocation. This chain is NADH-ubiquinone oxidoreductase chain 4L (MT-ND4L), found in Platanista minor (Indus river dolphin).